Consider the following 700-residue polypeptide: Elongation factor G (700 aa).

The tr-type G domain maps to 13-288; the sequence is SKIRNIGITA…AVIDYLPAPD (276 aa). Residues 22–29, 86–90, and 140–143 contribute to the GTP site; these read AHIDAGKT, DTPGH, and NKLD.

It belongs to the TRAFAC class translation factor GTPase superfamily. Classic translation factor GTPase family. EF-G/EF-2 subfamily.

It is found in the cytoplasm. In terms of biological role, catalyzes the GTP-dependent ribosomal translocation step during translation elongation. During this step, the ribosome changes from the pre-translocational (PRE) to the post-translocational (POST) state as the newly formed A-site-bound peptidyl-tRNA and P-site-bound deacylated tRNA move to the P and E sites, respectively. Catalyzes the coordinated movement of the two tRNA molecules, the mRNA and conformational changes in the ribosome. In Gluconobacter oxydans (strain 621H) (Gluconobacter suboxydans), this protein is Elongation factor G.